The chain runs to 328 residues: uncharacterized protein (328 aa).

The Bro-N domain maps to 3–126 (RVKIGEFKFG…EVIPQVLCTG (124 aa)).

This is an uncharacterized protein from Autographa californica nuclear polyhedrosis virus (AcMNPV).